The sequence spans 492 residues: Catalase isozyme 1 (492 aa).

Active-site residues include His65 and Asn138. Position 348 (Tyr348) interacts with heme.

It belongs to the catalase family. As to quaternary structure, homotetramer. Heme serves as cofactor.

The protein resides in the peroxisome. It catalyses the reaction 2 H2O2 = O2 + 2 H2O. Its function is as follows. Occurs in almost all aerobically respiring organisms and serves to protect cells from the toxic effects of hydrogen peroxide. The chain is Catalase isozyme 1 (CAT1) from Solanum lycopersicum (Tomato).